The sequence spans 760 residues: Exostosin-1 (760 aa).

Over methionine 1–arginine 6 the chain is Cytoplasmic. Residues tyrosine 7 to tyrosine 25 form a helical; Signal-anchor for type II membrane protein membrane-spanning segment. Over arginine 26–serine 760 the chain is Lumenal. 2 N-linked (GlcNAc...) asparagine glycosylation sites follow: asparagine 71 and asparagine 327. Arginine 437 is a binding site for UDP-N-acetyl-alpha-D-glucosamine. Asparagine 476 is a glycosylation site (N-linked (GlcNAc...) asparagine). The disordered stretch occupies residues leucine 540–proline 560. Polar residues predominate over residues glycine 541 to proline 560. UDP-N-acetyl-alpha-D-glucosamine-binding residues include arginine 565, aspartate 581, glutamate 582, aspartate 583, glutamate 669, aspartate 670, and arginine 713. Aspartate 583 serves as a coordination point for Mn(2+). An intrachain disulfide couples cysteine 668 to cysteine 716. Residue aspartate 670 is part of the active site.

The protein belongs to the glycosyltransferase 47 family. Interacts with sau. Mn(2+) is required as a cofactor. In terms of tissue distribution, ubiquitously expressed in early embryos. Later (in stage 10 embryos), it is expressed at higher level in the nervous system. Ubiquitously expressed in wing imaginal disk.

Its subcellular location is the endoplasmic reticulum membrane. The protein resides in the golgi apparatus membrane. The catalysed reaction is 3-O-{[(1-&gt;4)-beta-D-GlcA-(1-&gt;4)-alpha-D-GlcNAc](n)-(1-&gt;4)-beta-D-GlcA-(1-&gt;3)-beta-D-Gal-(1-&gt;3)-beta-D-Gal-(1-&gt;4)-beta-D-Xyl}-L-seryl-[protein] + UDP-N-acetyl-alpha-D-glucosamine = 3-O-{alpha-D-GlcNAc-[(1-&gt;4)-beta-D-GlcA-(1-&gt;4)-alpha-D-GlcNAc](n)-(1-&gt;4)-beta-D-GlcA-(1-&gt;3)-beta-D-Gal-(1-&gt;3)-beta-D-Gal-(1-&gt;4)-beta-D-Xyl}-L-seryl-[protein] + UDP + H(+). It catalyses the reaction 3-O-{alpha-D-GlcNAc-[(1-&gt;4)-beta-D-GlcA-(1-&gt;4)-alpha-D-GlcNAc](n)-(1-&gt;4)-beta-D-GlcA-(1-&gt;3)-beta-D-Gal-(1-&gt;3)-beta-D-Gal-(1-&gt;4)-beta-D-Xyl}-L-seryl-[protein] + UDP-alpha-D-glucuronate = 3-O-{[(1-&gt;4)-beta-D-GlcA-(1-&gt;4)-alpha-D-GlcNAc](n+1)-(1-&gt;4)-beta-D-GlcA-(1-&gt;3)-beta-D-Gal-(1-&gt;3)-beta-D-Gal-(1-&gt;4)-beta-D-Xyl}-L-seryl-[protein] + UDP + H(+). It functions in the pathway protein modification; protein glycosylation. It participates in glycan metabolism; heparan sulfate biosynthesis. The protein operates within glycan metabolism; heparin biosynthesis. Its function is as follows. Glycosyltransferase required for the biosynthesis of heparan-sulfate and responsible for the alternating addition of beta-1-4-linked glucuronic acid (GlcA) and alpha-1-4-linked N-acetylglucosamine (GlcNAc) units to nascent heparan sulfate chains. Botv is the trigger of heparan sulfate chain initiation and polymerization takes place by a complex of ttv and sotv. Plays a central role in the diffusion of morphogens hedgehog (hh), wingless (wg) and decapentaplegic (dpp) via its role in heparan sulfate proteoglycans (HSPGs) biosynthesis which are required for movement of hh, dpp and wg morphogens. The protein is Exostosin-1 (ttv) of Drosophila melanogaster (Fruit fly).